A 180-amino-acid chain; its full sequence is Large ribosomal subunit protein uL5 (180 aa).

Belongs to the universal ribosomal protein uL5 family. In terms of assembly, part of the 50S ribosomal subunit; part of the 5S rRNA/L5/L18/L25 subcomplex. Contacts the 5S rRNA and the P site tRNA. Forms a bridge to the 30S subunit in the 70S ribosome.

In terms of biological role, this is one of the proteins that bind and probably mediate the attachment of the 5S RNA into the large ribosomal subunit, where it forms part of the central protuberance. In the 70S ribosome it contacts protein S13 of the 30S subunit (bridge B1b), connecting the 2 subunits; this bridge is implicated in subunit movement. Contacts the P site tRNA; the 5S rRNA and some of its associated proteins might help stabilize positioning of ribosome-bound tRNAs. In Xanthomonas oryzae pv. oryzae (strain MAFF 311018), this protein is Large ribosomal subunit protein uL5.